A 423-amino-acid chain; its full sequence is Serine hydroxymethyltransferase (423 aa).

Residue 119–121 (GHI) participates in (6S)-5,6,7,8-tetrahydrofolate binding. Lys225 is subject to N6-(pyridoxal phosphate)lysine.

The protein belongs to the SHMT family. As to quaternary structure, homodimer. Requires pyridoxal 5'-phosphate as cofactor.

It localises to the cytoplasm. It carries out the reaction (6R)-5,10-methylene-5,6,7,8-tetrahydrofolate + glycine + H2O = (6S)-5,6,7,8-tetrahydrofolate + L-serine. Its pathway is one-carbon metabolism; tetrahydrofolate interconversion. It participates in amino-acid biosynthesis; glycine biosynthesis; glycine from L-serine: step 1/1. Functionally, catalyzes the reversible interconversion of serine and glycine with tetrahydrofolate (THF) serving as the one-carbon carrier. Also exhibits THF-independent aldolase activity toward beta-hydroxyamino acids, producing glycine and aldehydes, via a retro-aldol mechanism. The protein is Serine hydroxymethyltransferase of Methanocella arvoryzae (strain DSM 22066 / NBRC 105507 / MRE50).